We begin with the raw amino-acid sequence, 268 residues long: Interleukin-2 receptor subunit alpha (268 aa).

The signal sequence occupies residues 1-21; that stretch reads MEPRLLMLGFLSLTIVPSCRA. The region spanning 22–79 is the Sushi 1 domain; it reads ELCLYDPPEVPNATFKALSYKNGTILNCECKRGFRRLKELVYMRCLGNSWSSNCQCTS. At 22–236 the chain is on the extracellular side; it reads ELCLYDPPEV…ETFVLTMEYK (215 aa). 3 disulfide bridges follow: cysteine 24-cysteine 66, cysteine 49-cysteine 75, and cysteine 51-cysteine 77. 2 N-linked (GlcNAc...) asparagine glycosylation sites follow: asparagine 33 and asparagine 43. The interval 86–109 is disordered; the sequence is RKQVTAQLEHQKEQQTTTDMQKPT. Residues 88–109 are compositionally biased toward polar residues; it reads QVTAQLEHQKEQQTTTDMQKPT. Residue asparagine 116 is glycosylated (N-linked (GlcNAc...) asparagine). Positions 119-182 constitute a Sushi 2 domain; sequence GHCREPPPWK…WTQPQLTCVD (64 aa). Intrachain disulfides connect cysteine 121–cysteine 164 and cysteine 148–cysteine 180. The disordered stretch occupies residues 189–219; sequence FLASEESQGSRNSSPESETSCPITTTDFPQP. The span at 193 to 211 shows a compositional bias: polar residues; the sequence is EESQGSRNSSPESETSCPI. Residues 237 to 257 traverse the membrane as a helical segment; that stretch reads VAVASCLFLLISILLLSGLTW. Residues 258 to 268 lie on the Cytoplasmic side of the membrane; the sequence is QHRWRKSRRTI.

Non-covalent dimer of an alpha and a beta subunit. IL2R exists in 3 different forms: a high affinity dimer, an intermediate affinity monomer (beta subunit), and a low affinity monomer (alpha subunit). The high and intermediate affinity forms also associate with a gamma subunit.

Its subcellular location is the membrane. In terms of biological role, receptor for interleukin-2. The receptor is involved in the regulation of immune tolerance by controlling regulatory T cells (TREGs) activity. TREGs suppress the activation and expansion of autoreactive T-cells. This Mus musculus (Mouse) protein is Interleukin-2 receptor subunit alpha (Il2ra).